We begin with the raw amino-acid sequence, 154 residues long: Myoglobin (154 aa).

The Globin domain maps to 2–148 (GLSDGEWQLV…FRNDMATKYK (147 aa)). At serine 4 the chain carries Phosphoserine. Nitrite is bound at residue histidine 65. O2 is bound at residue histidine 65. Position 94 (histidine 94) interacts with heme b.

Belongs to the globin family. In terms of assembly, monomeric.

Its subcellular location is the cytoplasm. The protein resides in the sarcoplasm. It carries out the reaction Fe(III)-heme b-[protein] + nitric oxide + H2O = Fe(II)-heme b-[protein] + nitrite + 2 H(+). The enzyme catalyses H2O2 + AH2 = A + 2 H2O. Functionally, monomeric heme protein which primary function is to store oxygen and facilitate its diffusion within muscle tissues. Reversibly binds oxygen through a pentacoordinated heme iron and enables its timely and efficient release as needed during periods of heightened demand. Depending on the oxidative conditions of tissues and cells, and in addition to its ability to bind oxygen, it also has a nitrite reductase activity whereby it regulates the production of bioactive nitric oxide. Under stress conditions, like hypoxia and anoxia, it also protects cells against reactive oxygen species thanks to its pseudoperoxidase activity. This Tachyglossus aculeatus aculeatus (Southeast Australian short-beaked echidna) protein is Myoglobin (MB).